The following is a 176-amino-acid chain: ATP synthase subunit delta (176 aa).

The protein belongs to the ATPase delta chain family. F-type ATPases have 2 components, F(1) - the catalytic core - and F(0) - the membrane proton channel. F(1) has five subunits: alpha(3), beta(3), gamma(1), delta(1), epsilon(1). F(0) has three main subunits: a(1), b(2) and c(10-14). The alpha and beta chains form an alternating ring which encloses part of the gamma chain. F(1) is attached to F(0) by a central stalk formed by the gamma and epsilon chains, while a peripheral stalk is formed by the delta and b chains.

The protein localises to the cell inner membrane. Its function is as follows. F(1)F(0) ATP synthase produces ATP from ADP in the presence of a proton or sodium gradient. F-type ATPases consist of two structural domains, F(1) containing the extramembraneous catalytic core and F(0) containing the membrane proton channel, linked together by a central stalk and a peripheral stalk. During catalysis, ATP synthesis in the catalytic domain of F(1) is coupled via a rotary mechanism of the central stalk subunits to proton translocation. In terms of biological role, this protein is part of the stalk that links CF(0) to CF(1). It either transmits conformational changes from CF(0) to CF(1) or is implicated in proton conduction. The sequence is that of ATP synthase subunit delta from Actinobacillus succinogenes (strain ATCC 55618 / DSM 22257 / CCUG 43843 / 130Z).